Consider the following 197-residue polypeptide: Nucleoside triphosphate pyrophosphatase (197 aa).

The Proton acceptor role is filled by aspartate 75.

It belongs to the Maf family. A divalent metal cation is required as a cofactor.

It is found in the cytoplasm. The enzyme catalyses a ribonucleoside 5'-triphosphate + H2O = a ribonucleoside 5'-phosphate + diphosphate + H(+). It carries out the reaction a 2'-deoxyribonucleoside 5'-triphosphate + H2O = a 2'-deoxyribonucleoside 5'-phosphate + diphosphate + H(+). In terms of biological role, nucleoside triphosphate pyrophosphatase. May have a dual role in cell division arrest and in preventing the incorporation of modified nucleotides into cellular nucleic acids. This Haemophilus ducreyi (strain 35000HP / ATCC 700724) protein is Nucleoside triphosphate pyrophosphatase.